The following is a 270-amino-acid chain: Probable 6-oxopurine nucleoside phosphorylase (270 aa).

Phosphate is bound by residues S10 and 48-49; that span reads RH. Residue M191 coordinates substrate. T192 provides a ligand contact to phosphate. Residue 215–217 coordinates substrate; sequence NYA.

It belongs to the PNP/MTAP phosphorylase family. MTAP subfamily. Homohexamer. Dimer of a homotrimer.

It carries out the reaction a purine D-ribonucleoside + phosphate = a purine nucleobase + alpha-D-ribose 1-phosphate. Its pathway is purine metabolism; purine nucleoside salvage. Purine nucleoside phosphorylase which is highly specific for 6-oxopurine nucleosides. Cleaves guanosine or inosine to respective bases and sugar-1-phosphate molecules. Involved in purine salvage. This Korarchaeum cryptofilum (strain OPF8) protein is Probable 6-oxopurine nucleoside phosphorylase.